The following is a 346-amino-acid chain: MTNKTSLSYKDAGVDIDAGNALVNRIKGVVKQTRRPEVMGGLGGFGALCALPQKYREPILVSGTDGVGTKLRLAMDLKRHDTIGIDLVAMCVNDLVVQGAEPLFFLDYYATGKLDVDTAASVISGIAEGCQLSGCALVGGETAEMPGMYHGEDYDVAGFCVGVVEKSEIIDGSKVQAGDALIALAASGPHSNGYSLIRKILAVSNTDPEATELESKSLADHLLAPTKIYVKSLLSLIEQVDIHAIAHLTGGGFWENIPRVLPENTQAQINESSWQWPAIFNWLQQTGNVSRHEMYRTFNCGVGMVIALPPTAVEQAIELLTAAGEKAWQIGTIATLKEGEQQVVIQ.

The protein belongs to the AIR synthase family.

It is found in the cytoplasm. The catalysed reaction is 2-formamido-N(1)-(5-O-phospho-beta-D-ribosyl)acetamidine + ATP = 5-amino-1-(5-phospho-beta-D-ribosyl)imidazole + ADP + phosphate + H(+). Its pathway is purine metabolism; IMP biosynthesis via de novo pathway; 5-amino-1-(5-phospho-D-ribosyl)imidazole from N(2)-formyl-N(1)-(5-phospho-D-ribosyl)glycinamide: step 2/2. In Photorhabdus laumondii subsp. laumondii (strain DSM 15139 / CIP 105565 / TT01) (Photorhabdus luminescens subsp. laumondii), this protein is Phosphoribosylformylglycinamidine cyclo-ligase.